Here is a 250-residue protein sequence, read N- to C-terminus: uncharacterized protein (250 aa).

A coiled-coil region spans residues 165-208 (HLNLETANTKATEYQKNYQEELKQRQELRQKLLQERTQKMLEAL). Positions 201–233 (TQKMLEALHQEETPEQDARDTAKKKTDQEEHTM) are enriched in basic and acidic residues. Residues 201–250 (TQKMLEALHQEETPEQDARDTAKKKTDQEEHTMRKANAPKTKASGEAPTP) are disordered.

This is an uncharacterized protein from Treponema pallidum (strain Nichols).